A 660-amino-acid chain; its full sequence is F-box/LRR-repeat protein 5 (660 aa).

The interval 1–157 (MAPFPDEVDL…IKKKVIAQHC (157 aa)) is hemerythrin-like. Fe(3+) is bound by residues H15, H57, E58, E61, H80, H124, and E127. One can recognise an F-box domain in the interval 200-246 (SASICNLPPEVMLNIFSYLNPQDLCRCSQVNTKWAQLARTGSLWRHL). Residues 283-305 (YQEWDEDADIDESEETGEDDPSI) are disordered. The segment covering 285-303 (EWDEDADIDESEETGEDDP) has biased composition (acidic residues). LRR repeat units follow at residues 311–337 (EKEL…VLAY), 338–362 (SSAT…LDLT), 363–389 (QTDI…DLSG), 390–417 (CEKI…RLLK), 551–576 (IRDI…SLSG), 577–604 (CHQI…NLSG), 605–630 (CLNV…HFYY), and 631–649 (CDNI…QNLQ). C631, C645, C655, and C656 together coordinate [2Fe-2S] cluster.

In terms of assembly, part of a SCF (SKP1-cullin-F-box) protein ligase complex. Requires [2Fe-2S] cluster as cofactor. In terms of processing, ubiquitinated upon iron and oxygen depletion, leading to its degradation by the proteasome. Ubiquitination is regulated by the hemerythrin-like region that acts as an oxygen and iron sensor.

It is found in the cytoplasm. It localises to the perinuclear region. The protein resides in the nucleus. The protein operates within protein modification; protein ubiquitination. Functionally, component of some SCF (SKP1-cullin-F-box) protein ligase complex that plays a central role in iron homeostasis by promoting the ubiquitination and subsequent degradation of ireb2/irp2. Upon high iron and oxygen level, it specifically recognizes and binds ireb2/irp2, promoting its ubiquitination and degradation by the proteasome. This is F-box/LRR-repeat protein 5 (fbxl5) from Xenopus tropicalis (Western clawed frog).